A 110-amino-acid chain; its full sequence is uncharacterized protein (110 aa).

This is an uncharacterized protein from Autographa californica nuclear polyhedrosis virus (AcMNPV).